Here is a 146-residue protein sequence, read N- to C-terminus: Hemoglobin subunit beta (146 aa).

Valine 1 bears the N-acetylvaline mark. One can recognise a Globin domain in the interval glutamate 2–histidine 146. Serine 44 carries the post-translational modification Phosphoserine. At lysine 59 the chain carries N6-acetyllysine. Position 63 (histidine 63) interacts with heme b. Lysine 82 carries the N6-acetyllysine modification. Histidine 92 lines the heme b pocket. Cysteine 93 carries the S-nitrosocysteine modification. Lysine 144 carries the N6-acetyllysine modification.

Belongs to the globin family. Heterotetramer of two alpha chains and two beta chains. Red blood cells.

Its function is as follows. Involved in oxygen transport from the lung to the various peripheral tissues. This Ceratotherium simum (White rhinoceros) protein is Hemoglobin subunit beta (HBB).